We begin with the raw amino-acid sequence, 115 residues long: Cytochrome c (115 aa).

Heme c contacts are provided by Cys26, Cys29, His30, and Met91.

Belongs to the cytochrome c family. Post-translationally, binds 1 heme c group covalently per subunit.

The protein localises to the mitochondrion intermembrane space. In terms of biological role, electron carrier protein. The oxidized form of the cytochrome c heme group can accept an electron from the heme group of the cytochrome c1 subunit of cytochrome reductase. Cytochrome c then transfers this electron to the cytochrome oxidase complex, the final protein carrier in the mitochondrial electron-transport chain. The polypeptide is Cytochrome c (Theileria parva (East coast fever infection agent)).